We begin with the raw amino-acid sequence, 815 residues long: uncharacterized protein (815 aa).

An N-terminal signal peptide occupies residues 1-21 (MNIYRLSFVSCLVMAMPCAMA). C795 and C814 form a disulfide bridge.

The protein belongs to the fimbrial export usher family.

The protein resides in the cell outer membrane. Could be involved in the export and assembly of the putative YbgD fimbrial subunit across the outer membrane. This is an uncharacterized protein from Escherichia coli (strain K12).